The chain runs to 394 residues: Elongation factor Tu (394 aa).

In terms of domain architecture, tr-type G spans 10–204 (KPHVNVGTIG…YLDSYIPEPE (195 aa)). The G1 stretch occupies residues 19 to 26 (GHVDHGKT). 19-26 (GHVDHGKT) provides a ligand contact to GTP. A Mg(2+)-binding site is contributed by T26. The tract at residues 60–64 (GITIN) is G2. A G3 region spans residues 81–84 (DCPG). GTP is bound by residues 81–85 (DCPGH) and 136–139 (NKCD). Positions 136 to 139 (NKCD) are G4. Residues 174 to 176 (SAL) are G5.

The protein belongs to the TRAFAC class translation factor GTPase superfamily. Classic translation factor GTPase family. EF-Tu/EF-1A subfamily. In terms of assembly, monomer.

The protein localises to the cytoplasm. The catalysed reaction is GTP + H2O = GDP + phosphate + H(+). In terms of biological role, GTP hydrolase that promotes the GTP-dependent binding of aminoacyl-tRNA to the A-site of ribosomes during protein biosynthesis. In Enterobacter sp. (strain 638), this protein is Elongation factor Tu.